The primary structure comprises 590 residues: Aspartate--tRNA(Asp/Asn) ligase (590 aa).

An L-aspartate-binding site is contributed by glutamate 175. The interval 199–202 (QQYK) is aspartate. L-aspartate contacts are provided by arginine 221 and histidine 450. 221–223 (RDE) is a binding site for ATP. Glutamate 484 serves as a coordination point for ATP. Residue arginine 491 coordinates L-aspartate. Residue 536–539 (GVDR) participates in ATP binding.

It belongs to the class-II aminoacyl-tRNA synthetase family. Type 1 subfamily. As to quaternary structure, homodimer.

The protein localises to the cytoplasm. The catalysed reaction is tRNA(Asx) + L-aspartate + ATP = L-aspartyl-tRNA(Asx) + AMP + diphosphate. Its function is as follows. Aspartyl-tRNA synthetase with relaxed tRNA specificity since it is able to aspartylate not only its cognate tRNA(Asp) but also tRNA(Asn). Reaction proceeds in two steps: L-aspartate is first activated by ATP to form Asp-AMP and then transferred to the acceptor end of tRNA(Asp/Asn). The protein is Aspartate--tRNA(Asp/Asn) ligase of Rhodopseudomonas palustris (strain BisA53).